Consider the following 565-residue polypeptide: Atlastin-2 (565 aa).

At 1 to 458 the chain is on the cytoplasmic side; the sequence is MVLKKGVKFF…NIFYAARTPA (458 aa). The region spanning 73 to 318 is the GB1/RHD3-type G domain; it reads DLNIVVVSVA…LVPLLLAPEN (246 aa). The GDP site is built by R86, K87, G88, K89, S90, F91, Q157, R226, and D227. 6 residues coordinate GTP: R86, K87, G88, K89, S90, and F91. A Mg(2+)-binding site is contributed by S90. The GTP site is built by R226 and D227. The stretch at 238 to 266 forms a coiled coil; sequence LEGGKQFLEKRLQVKKNQHEELQNVRKHI. K252 carries the post-translational modification N6-methyllysine. V285 and N288 together coordinate GDP. V285 serves as a coordination point for GTP. Positions 356-447 are 3HB (three-helix bundle) domain; it reads MLQATAEANN…YANFIKHNDG (92 aa). Residues 448–456 are linker; that stretch reads KNIFYAART. A helical transmembrane segment spans residues 459 to 479; that stretch reads TLFAVMFAMYIISGLTGFIGL. Residues 480-481 lie on the Lumenal side of the membrane; the sequence is NS. A helical membrane pass occupies residues 482–502; it reads IAVLCNLVMGLALTFLCTWAY. Residues 503-565 lie on the Cytoplasmic side of the membrane; the sequence is VKYSGEFREI…VSHHARLKTD (63 aa). The tract at residues 529–565 is autoinhibitory domain; that stretch reads KPLGDNLMEENIRQSVTNSIKAGLTDQVSHHARLKTD.

This sequence belongs to the TRAFAC class dynamin-like GTPase superfamily. GB1/RHD3 GTPase family. GB1 subfamily. In terms of assembly, monomeric and homodimeric. The homodimer, transiently formed by two molecules on opposing membranes, is the active form mediating ER membrane fusion. Interacts with REEP5 and RTN3; these proteins are involved in endoplasmic reticulum tubular network organization. Interacts with ZFYVE27; both proteins are involved in endoplasmic reticulum tubular network organization.

It localises to the endoplasmic reticulum membrane. It carries out the reaction GTP + H2O = GDP + phosphate + H(+). Its function is as follows. Atlastin-2 (ATL2) is a membrane-anchored GTPase that mediates the GTP-dependent fusion of endoplasmic reticulum (ER) membranes, maintaining the continuous ER network. It facilitates the formation of three-way junctions where ER tubules intersect. Two atlastin-2 on neighboring ER tubules bind GTP and form loose homodimers through the GB1/RHD3-type G domains and 3HB regions. Upon GTP hydrolysis, the 3HB regions tighten, pulling the membranes together to drive their fusion. After fusion, the homodimer disassembles upon release of inorganic phosphate (Pi). Subsequently, GDP dissociates, resetting the monomers to a conformation ready for a new fusion cycle. This chain is Atlastin-2, found in Macaca fascicularis (Crab-eating macaque).